Here is a 170-residue protein sequence, read N- to C-terminus: Zinc finger A20 and AN1 domain-containing stress-associated protein 6 (170 aa).

An A20-type zinc finger spans residues P10–Q44. Zn(2+)-binding residues include C16, C20, C32, and C35. The segment at T53 to P76 is disordered. The AN1-type zinc-finger motif lies at Q105–G151. Zn(2+) is bound by residues C111, C114, C125, C127, C132, H135, H141, and C143.

Functionally, may be involved in environmental stress response. This chain is Zinc finger A20 and AN1 domain-containing stress-associated protein 6 (SAP6), found in Arabidopsis thaliana (Mouse-ear cress).